Here is a 602-residue protein sequence, read N- to C-terminus: Probable pectinesterase/pectinesterase inhibitor 64 (602 aa).

A helical membrane pass occupies residues 36-56 (ILIIIAASCILLLLISLLIYA). The segment at 62-91 (SRNHHNPSHQTPTSDDHPPPETPPSPPPIA) is disordered. The span at 81 to 90 (PETPPSPPPI) shows a compositional bias: pro residues. Positions 87-237 (PPPIAQIRLA…VNLTGNALSM (151 aa)) are pectinesterase inhibitor 64. Residues Asn-98, Asn-156, Asn-212, Asn-229, and Asn-315 are each glycosylated (N-linked (GlcNAc...) asparagine). The tract at residues 288 to 595 (DVTVCKNGGK…YSVANFIQAD (308 aa)) is pectinesterase 64. Residues Thr-367 and Gln-397 each coordinate substrate. Asp-420 (proton donor; for pectinesterase activity) is an active-site residue. The cysteines at positions 434 and 454 are disulfide-linked. Asp-441 acts as the Nucleophile; for pectinesterase activity in catalysis. Asn-492 and Asn-496 each carry an N-linked (GlcNAc...) asparagine glycan. Residues Arg-518 and Trp-520 each coordinate substrate.

It in the N-terminal section; belongs to the PMEI family. The protein in the C-terminal section; belongs to the pectinesterase family. In terms of tissue distribution, expressed in siliques.

Its subcellular location is the membrane. The catalysed reaction is [(1-&gt;4)-alpha-D-galacturonosyl methyl ester](n) + n H2O = [(1-&gt;4)-alpha-D-galacturonosyl](n) + n methanol + n H(+). Its pathway is glycan metabolism; pectin degradation; 2-dehydro-3-deoxy-D-gluconate from pectin: step 1/5. In terms of biological role, acts in the modification of cell walls via demethylesterification of cell wall pectin. The polypeptide is Probable pectinesterase/pectinesterase inhibitor 64 (PME64) (Arabidopsis thaliana (Mouse-ear cress)).